The sequence spans 171 residues: Peptide methionine sulfoxide reductase MsrA (171 aa).

Cys12 is a catalytic residue.

Belongs to the MsrA Met sulfoxide reductase family.

It catalyses the reaction L-methionyl-[protein] + [thioredoxin]-disulfide + H2O = L-methionyl-(S)-S-oxide-[protein] + [thioredoxin]-dithiol. The enzyme catalyses [thioredoxin]-disulfide + L-methionine + H2O = L-methionine (S)-S-oxide + [thioredoxin]-dithiol. In terms of biological role, has an important function as a repair enzyme for proteins that have been inactivated by oxidation. Catalyzes the reversible oxidation-reduction of methionine sulfoxide in proteins to methionine. The protein is Peptide methionine sulfoxide reductase MsrA of Leuconostoc mesenteroides subsp. mesenteroides (strain ATCC 8293 / DSM 20343 / BCRC 11652 / CCM 1803 / JCM 6124 / NCDO 523 / NBRC 100496 / NCIMB 8023 / NCTC 12954 / NRRL B-1118 / 37Y).